The chain runs to 130 residues: MMKSIQLCILLWCLRAVCCHSCELTNITISVEKEECRFCISINTTWCEGYCYTRDLVYKDPARPNTQKVCTFKELVYETIRLPGCARHSDSLYTYPVATECHCGKCDSDSTDCTVRGLGPSYCSFGEMKE.

Positions methionine 1–histidine 20 are cleaved as a signal peptide. 6 disulfides stabilise this stretch: cysteine 22/cysteine 70, cysteine 36/cysteine 85, cysteine 39/cysteine 123, cysteine 47/cysteine 101, cysteine 51/cysteine 103, and cysteine 106/cysteine 113. Residues asparagine 26 and asparagine 43 are each glycosylated (N-linked (GlcNAc...) asparagine).

The protein belongs to the glycoprotein hormones subunit beta family. As to quaternary structure, heterodimer. The active follitropin is a heterodimer composed of an alpha chain/CGA shared with other hormones and a unique beta chain/FSHB shown here.

It localises to the secreted. Its function is as follows. Together with the alpha chain CGA constitutes follitropin, the follicle-stimulating hormone, and provides its biological specificity to the hormone heterodimer. Binds FSHR, a G protein-coupled receptor, on target cells to activate downstream signaling pathways. Follitropin is involved in follicle development and spermatogenesis in reproductive organs. This Rattus norvegicus (Rat) protein is Follitropin subunit beta (Fshb).